The primary structure comprises 323 residues: Methionyl-tRNA formyltransferase (323 aa).

(6S)-5,6,7,8-tetrahydrofolate is bound at residue 115–118 (SLLP).

The protein belongs to the Fmt family.

The enzyme catalyses L-methionyl-tRNA(fMet) + (6R)-10-formyltetrahydrofolate = N-formyl-L-methionyl-tRNA(fMet) + (6S)-5,6,7,8-tetrahydrofolate + H(+). Its function is as follows. Attaches a formyl group to the free amino group of methionyl-tRNA(fMet). The formyl group appears to play a dual role in the initiator identity of N-formylmethionyl-tRNA by promoting its recognition by IF2 and preventing the misappropriation of this tRNA by the elongation apparatus. The polypeptide is Methionyl-tRNA formyltransferase (Blochmanniella floridana).